A 278-amino-acid chain; its full sequence is MDTELLKTFLEVSRTRHFGRAAEALYLTQSAVSFRIRQLENQLGVNLFTRHRNNIRLTTAGEKLLPYAETLMNTWQAARKEVAHTSRHNEFSIGASASLWECMLNAWLGRLYQLQEPQSGLQFEARIAQRQSLVKQLHERQLDLLITTEAPKMDEFSSQLLGHFTLALYCSSPARKKSELNYLRLEWGPDFQQHETGLIAADKVPVLTTSSAELARQQLSALNGCSWLPVNWANEKGGLHTVADSATLSRPLYAIWLQNSDRYSLICDLLKTDVLDEQ.

The HTH lysR-type domain maps to 1–58; that stretch reads MDTELLKTFLEVSRTRHFGRAAEALYLTQSAVSFRIRQLENQLGVNLFTRHRNNIRLT. The segment at residues 18–37 is a DNA-binding region (H-T-H motif); the sequence is FGRAAEALYLTQSAVSFRIR.

The protein belongs to the LysR transcriptional regulatory family.

Its function is as follows. Negatively regulates the transcription of the flagellar master operon flhDC by binding to the upstream region of the operon. This Salmonella dublin (strain CT_02021853) protein is HTH-type transcriptional regulator HdfR.